The chain runs to 241 residues: Small ribosomal subunit protein uS2 (241 aa).

This sequence belongs to the universal ribosomal protein uS2 family.

The chain is Small ribosomal subunit protein uS2 from Citrobacter koseri (strain ATCC BAA-895 / CDC 4225-83 / SGSC4696).